Here is a 95-residue protein sequence, read N- to C-terminus: Protein TusB (95 aa).

The protein belongs to the DsrH/TusB family. As to quaternary structure, heterohexamer, formed by a dimer of trimers. The hexameric TusBCD complex contains 2 copies each of TusB, TusC and TusD. The TusBCD complex interacts with TusE.

Its subcellular location is the cytoplasm. Functionally, part of a sulfur-relay system required for 2-thiolation of 5-methylaminomethyl-2-thiouridine (mnm(5)s(2)U) at tRNA wobble positions. This Salmonella arizonae (strain ATCC BAA-731 / CDC346-86 / RSK2980) protein is Protein TusB.